We begin with the raw amino-acid sequence, 194 residues long: Imidazoleglycerol-phosphate dehydratase (194 aa).

This sequence belongs to the imidazoleglycerol-phosphate dehydratase family.

It is found in the cytoplasm. It catalyses the reaction D-erythro-1-(imidazol-4-yl)glycerol 3-phosphate = 3-(imidazol-4-yl)-2-oxopropyl phosphate + H2O. It participates in amino-acid biosynthesis; L-histidine biosynthesis; L-histidine from 5-phospho-alpha-D-ribose 1-diphosphate: step 6/9. The sequence is that of Imidazoleglycerol-phosphate dehydratase from Caldanaerobacter subterraneus subsp. tengcongensis (strain DSM 15242 / JCM 11007 / NBRC 100824 / MB4) (Thermoanaerobacter tengcongensis).